The sequence spans 511 residues: MEKFEEISEKHKSRQQYFVYPLLFQEFLYTFAHDYGLNDSEPVEILSCNKKKFSSLLVKRLIIRMYQQNFWINSVNHPNQDRLLDYKNYFYSDFFSQILSEGFAIVVEIPFSLREFFCPKEKEIPKFQNLRSIHSIFSFLEDKFLHLHSLSHIEIPYPIHLEILVQLLQYHIQDVPSLHLLRFFLNYYSNWNSFITSIKSFFLLKKKNKRLFRFLYNSYVSEYEFFLLFLRKQSSCLPLASSGGFLERIHFSRKMEHFGIMDPGFFRKTLWFFMDPLMHYVRYQGKAILASKGTLFLKKKWKWYLVNFCQYSFSFWTQPRRIHLNQLANSCFDFLGYLSSVPKSTLLVRNQMLENSFLIDTQMTKFDTIVPATLLIGSLSKAQFCTGSGHPISKPIWTELSDWDILDRFGRICKNLFHYHSGSSKKRTLYRLKYILRLSCARTLARKHKSTVRTFMQRLGSVFLEEFFTEEEQVFSLMFTKTTLFYFRGSHSERIWYLDIIRINGLVNPRN.

Belongs to the intron maturase 2 family. MatK subfamily.

It is found in the plastid. The protein resides in the chloroplast. Its function is as follows. Usually encoded in the trnK tRNA gene intron. Probably assists in splicing its own and other chloroplast group II introns. This Brachypodium sylvaticum (False brome) protein is Maturase K.